The primary structure comprises 360 residues: Photosystem II protein D1 (360 aa).

The next 3 helical transmembrane spans lie at 29–46 (YIGWFGVLMIPTLLTATT), 118–133 (HFLLGVCGWIGREWEF), and 142–156 (WISVAFTAPVAAASA). Chlorophyll a is bound at residue histidine 118. Tryptophan 126 is a pheophytin a binding site. Residues aspartate 170 and glutamate 189 each coordinate [CaMn4O5] cluster. The helical transmembrane segment at 197-218 (FHQLGVAGVFGGSLFSAMHGSL) threads the bilayer. Histidine 198 contacts chlorophyll a. A quinone contacts are provided by residues histidine 215 and 264–265 (SF). Position 215 (histidine 215) interacts with Fe cation. Histidine 272 provides a ligand contact to Fe cation. A helical membrane pass occupies residues 274 to 288 (FLGLWPVVGIWFTAL). Positions 332, 333, 342, and 344 each coordinate [CaMn4O5] cluster. The propeptide occupies 345–360 (AGESLPVALTAPAVNG).

Belongs to the reaction center PufL/M/PsbA/D family. In terms of assembly, PSII is composed of 1 copy each of membrane proteins PsbA, PsbB, PsbC, PsbD, PsbE, PsbF, PsbH, PsbI, PsbJ, PsbK, PsbL, PsbM, PsbT, PsbX, PsbY, PsbZ, Psb30/Ycf12, at least 3 peripheral proteins of the oxygen-evolving complex and a large number of cofactors. It forms dimeric complexes. The D1/D2 heterodimer binds P680, chlorophylls that are the primary electron donor of PSII, and subsequent electron acceptors. It shares a non-heme iron and each subunit binds pheophytin, quinone, additional chlorophylls, carotenoids and lipids. D1 provides most of the ligands for the Mn4-Ca-O5 cluster of the oxygen-evolving complex (OEC). There is also a Cl(-1) ion associated with D1 and D2, which is required for oxygen evolution. The PSII complex binds additional chlorophylls, carotenoids and specific lipids. is required as a cofactor. Post-translationally, tyr-161 forms a radical intermediate that is referred to as redox-active TyrZ, YZ or Y-Z. In terms of processing, C-terminally processed by CTPA; processing is essential to allow assembly of the oxygen-evolving complex and thus photosynthetic growth.

It is found in the plastid. The protein localises to the chloroplast thylakoid membrane. The catalysed reaction is 2 a plastoquinone + 4 hnu + 2 H2O = 2 a plastoquinol + O2. In terms of biological role, photosystem II (PSII) is a light-driven water:plastoquinone oxidoreductase that uses light energy to abstract electrons from H(2)O, generating O(2) and a proton gradient subsequently used for ATP formation. It consists of a core antenna complex that captures photons, and an electron transfer chain that converts photonic excitation into a charge separation. The D1/D2 (PsbA/PsbD) reaction center heterodimer binds P680, the primary electron donor of PSII as well as several subsequent electron acceptors. The chain is Photosystem II protein D1 from Rhodomonas salina (Cryptomonas salina).